The primary structure comprises 364 residues: Lysophosphatidic acid receptor 1 (364 aa).

At 1 to 50 (MAAASTSSPVISQPQFTAMNEQQCFYNESIAFFYNRSGKYLATEWNTVSK) the chain is on the extracellular side. 2 cysteine pairs are disulfide-bonded: cysteine 24/cysteine 190 and cysteine 188/cysteine 195. N-linked (GlcNAc...) asparagine glycosylation is found at asparagine 27 and asparagine 35. A 1-acyl-sn-glycero-3-phosphate is bound at residue lysine 39. The helical transmembrane segment at 51–75 (LVMGLGITVCVFIMLANLLVMVAIY) threads the bilayer. Residues 76–83 (VNRRFHFP) lie on the Cytoplasmic side of the membrane. A helical membrane pass occupies residues 84 to 107 (IYYLMANLAAADFFAGLAYFYLMF). Residues 108-121 (NTGPNTRRLTVSTW) are Extracellular-facing. Residues 122-144 (LLRQGLIDTSLTASVANLLAIAI) form a helical membrane-spanning segment. Position 124-129 (124-129 (RQGLID)) interacts with a 1-acyl-sn-glycero-3-phosphate. Residues 145-163 (ERHITVFRMQLHTRMSNRR) are Cytoplasmic-facing. Residues 164–184 (VVVVIVVIWTMAIVMGAIPSV) traverse the membrane as a helical segment. The Extracellular portion of the chain corresponds to 185–204 (GWNCICDIDHCSNMAPLYSD). A helical membrane pass occupies residues 205-225 (SYLVFWAIFNLVTFVVMVVLY). Tryptophan 210 is an a 1-acyl-sn-glycero-3-phosphate binding site. The Cytoplasmic portion of the chain corresponds to 226–255 (AHIFGYVRQRTMRMSRHSSGPRRNRDTMMS). Residues 256 to 280 (LLKTVVIVLGAFIVCWTPGLVLLLL) traverse the membrane as a helical segment. The Extracellular segment spans residues 281–294 (DVCCPQCDVLAYEK). A disulfide bridge connects residues cysteine 284 and cysteine 287. Residues 295 to 315 (FFLLLAEFNSAMNPIIYSYRD) form a helical membrane-spanning segment. Over 316-364 (KEMSATFRQILCCQRNENPNGPTEGSDRSASSLNHTILAGVHSNDHSVV) the chain is Cytoplasmic. Serine 341 carries the post-translational modification Phosphoserine. Residue threonine 351 is modified to Phosphothreonine.

The protein belongs to the G-protein coupled receptor 1 family. Interacts with RALA and GRK2. Interacts with GNAQ and GNA13. Interacts with CD14; the interaction is enhanced by exposure to bacterial lipopolysaccharide (LPS). In terms of processing, N-glycosylated. Detected in lung. Detected in oligodendrocytes in corpus callosum in brain cortex (at protein level). Expressed within the embryonic cerebral cortex, where it is enriched in the ventricular zone. In the adult brain, also expressed in oligodendrocytes, as well as Schwann cells of the peripheral nervous system. Expressed in many other tissues, including lung, heart, intestine, spleen, thymus, and stomach. No expression in liver. Detected in kidney and testis. Detected in embryonic fibroblasts. Detected in adult lung fibroblasts and lung endothelial cells. Detected in dorsal root ganglion and dorsal root. Detected in astrocytes. Detected in bone.

It localises to the cell surface. The protein localises to the cell membrane. The protein resides in the endosome. Its function is as follows. Receptor for lysophosphatidic acid (LPA). Plays a role in the reorganization of the actin cytoskeleton, cell migration, differentiation and proliferation, and thereby contributes to the responses to tissue damage and infectious agents. Activates downstream signaling cascades via the G(i)/G(o), G(12)/G(13), and G(q) families of heteromeric G proteins. Signaling inhibits adenylyl cyclase activity and decreases cellular cAMP levels. Signaling triggers an increase of cytoplasmic Ca(2+) levels. Activates RALA; this leads to the activation of phospholipase C (PLC) and the formation of inositol 1,4,5-trisphosphate. Signaling mediates activation of down-stream MAP kinases. Contributes to the regulation of cell shape. Promotes Rho-dependent reorganization of the actin cytoskeleton in neuronal cells and neurite retraction. Promotes the activation of Rho and the formation of actin stress fibers. Promotes formation of lamellipodia at the leading edge of migrating cells via activation of RAC1. Through its function as LPA receptor, plays a role in chemotaxis and cell migration, including responses to injury and wounding. Plays a role in triggering inflammation in response to bacterial lipopolysaccharide (LPS) via its interaction with CD14. Promotes cell proliferation in response to LPA. Inhibits the intracellular ciliogenesis pathway in response to LPA and through AKT1 activation. Required for normal skeleton development. May play a role in osteoblast differentiation. Required for normal brain development. Required for normal proliferation, survival and maturation of newly formed neurons in the adult dentate gyrus. Plays a role in pain perception and in the initiation of neuropathic pain. The polypeptide is Lysophosphatidic acid receptor 1 (Lpar1) (Mus musculus (Mouse)).